Consider the following 482-residue polypeptide: Serine carboxypeptidase-like 36 (482 aa).

Residues 1-25 (MGKRQDWSVTACIFLFLSLASQIHC) form the signal peptide. 3 cysteine pairs are disulfide-bonded: Cys-119/Cys-363, Cys-275/Cys-286, and Cys-310/Cys-331. The active site involves Ser-210. N-linked (GlcNAc...) asparagine glycosylation is present at Asn-228. N-linked (GlcNAc...) asparagine glycans are attached at residues Asn-312 and Asn-352. Residue Asp-402 is part of the active site. 2 N-linked (GlcNAc...) asparagine glycosylation sites follow: Asn-418 and Asn-444. Residue His-455 is part of the active site.

Belongs to the peptidase S10 family. In terms of tissue distribution, expressed in seedlings, flowers and siliques.

Its subcellular location is the secreted. Probable carboxypeptidase. This is Serine carboxypeptidase-like 36 (SCPL36) from Arabidopsis thaliana (Mouse-ear cress).